We begin with the raw amino-acid sequence, 136 residues long: Large ribosomal subunit protein uL16 (136 aa).

Belongs to the universal ribosomal protein uL16 family. Part of the 50S ribosomal subunit.

In terms of biological role, binds 23S rRNA and is also seen to make contacts with the A and possibly P site tRNAs. The protein is Large ribosomal subunit protein uL16 of Vesicomyosocius okutanii subsp. Calyptogena okutanii (strain HA).